A 149-amino-acid polypeptide reads, in one-letter code: Ribosome maturation factor RimP (149 aa).

The protein belongs to the RimP family.

It localises to the cytoplasm. In terms of biological role, required for maturation of 30S ribosomal subunits. The polypeptide is Ribosome maturation factor RimP (Clostridium acetobutylicum (strain ATCC 824 / DSM 792 / JCM 1419 / IAM 19013 / LMG 5710 / NBRC 13948 / NRRL B-527 / VKM B-1787 / 2291 / W)).